Here is a 399-residue protein sequence, read N- to C-terminus: S-adenosylmethionine synthase (399 aa).

Histidine 16 lines the ATP pocket. Residue aspartate 18 participates in Mg(2+) binding. Residue glutamate 44 coordinates K(+). L-methionine is bound by residues glutamate 57 and glutamine 100. A flexible loop region spans residues 100–110 (QSPDIAQGVDT). Residues 175–177 (DGK), 246–247 (KF), aspartate 255, 261–262 (RK), alanine 278, and lysine 282 contribute to the ATP site. Aspartate 255 contributes to the L-methionine binding site. L-methionine is bound at residue lysine 286. Lysine 341 participates in a covalent cross-link: Isoglutamyl lysine isopeptide (Lys-Gln) (interchain with Q-Cter in protein Pup).

It belongs to the AdoMet synthase family. Homotetramer; dimer of dimers. It depends on Mg(2+) as a cofactor. K(+) serves as cofactor.

It is found in the cytoplasm. The enzyme catalyses L-methionine + ATP + H2O = S-adenosyl-L-methionine + phosphate + diphosphate. It participates in amino-acid biosynthesis; S-adenosyl-L-methionine biosynthesis; S-adenosyl-L-methionine from L-methionine: step 1/1. Its function is as follows. Catalyzes the formation of S-adenosylmethionine (AdoMet) from methionine and ATP. The overall synthetic reaction is composed of two sequential steps, AdoMet formation and the subsequent tripolyphosphate hydrolysis which occurs prior to release of AdoMet from the enzyme. This Mycolicibacterium smegmatis (strain ATCC 700084 / mc(2)155) (Mycobacterium smegmatis) protein is S-adenosylmethionine synthase.